A 344-amino-acid chain; its full sequence is Protein pelota homolog (344 aa).

The protein belongs to the eukaryotic release factor 1 family. Pelota subfamily. Monomer. A divalent metal cation serves as cofactor.

It localises to the cytoplasm. Its function is as follows. May function in recognizing stalled ribosomes, interact with stem-loop structures in stalled mRNA molecules, and effect endonucleolytic cleavage of the mRNA. May play a role in the release non-functional ribosomes and degradation of damaged mRNAs. Has endoribonuclease activity. The sequence is that of Protein pelota homolog from Saccharolobus islandicus (strain M.14.25 / Kamchatka #1) (Sulfolobus islandicus).